An 88-amino-acid polypeptide reads, in one-letter code: MKEKDNFEMVINFKRAFMGRRNQRTKRAIKMIRNIVQRHFGAEKVIIDPLLAKSITYNGRDKIVRKVRVAVKKIGEKTYLVRLALKSE.

Belongs to the eukaryotic ribosomal protein eL31 family.

The polypeptide is Large ribosomal subunit protein eL31 (rpl31e) (Sulfurisphaera tokodaii (strain DSM 16993 / JCM 10545 / NBRC 100140 / 7) (Sulfolobus tokodaii)).